The following is a 210-amino-acid chain: Vacuolar protein sorting-associated protein 2 homolog 3 (210 aa).

The interval 1 to 23 (MNIFTKKPNPREVLRESKREMTQ) is disordered. The segment covering 9-23 (NPREVLRESKREMTQ) has biased composition (basic and acidic residues). A coiled-coil region spans residues 28 to 84 (IEKEIGSLQSEEKKLVLEIKRTAKSGNEGATKILARQLIRLRQQIANLQGSRAQMRG). The tract at residues 178–200 (LSSAPKGKIGGKKAEDVGSSGID) is disordered.

The protein belongs to the SNF7 family. Component of the endosomal sorting required for transport complex III (ESCRT-III), composed at least of VPS2, VPS20, VPS24 and VPS32.

The protein localises to the endosome. Functionally, component of the ESCRT-III complex, which is required for multivesicular bodies (MVBs) formation and sorting of endosomal cargo proteins into MVBs. The ESCRT-III complex is probably involved in the concentration of MVB cargo. The chain is Vacuolar protein sorting-associated protein 2 homolog 3 (VPS2.3) from Arabidopsis thaliana (Mouse-ear cress).